Reading from the N-terminus, the 459-residue chain is tRNA modification GTPase MnmE (459 aa).

Positions 20, 85, and 124 each coordinate (6S)-5-formyl-5,6,7,8-tetrahydrofolate. In terms of domain architecture, TrmE-type G spans 221-380 (GLSTVIIGRP…LEMAIQSLFF (160 aa)). Asn231 provides a ligand contact to K(+). GTP contacts are provided by residues 231 to 236 (NVGKSS), 250 to 256 (TDIPGTT), and 275 to 278 (DTAG). Ser235 provides a ligand contact to Mg(2+). K(+) contacts are provided by Thr250, Ile252, and Thr255. Thr256 lines the Mg(2+) pocket. Lys459 serves as a coordination point for (6S)-5-formyl-5,6,7,8-tetrahydrofolate.

Belongs to the TRAFAC class TrmE-Era-EngA-EngB-Septin-like GTPase superfamily. TrmE GTPase family. In terms of assembly, homodimer. Heterotetramer of two MnmE and two MnmG subunits. K(+) is required as a cofactor.

The protein localises to the cytoplasm. Functionally, exhibits a very high intrinsic GTPase hydrolysis rate. Involved in the addition of a carboxymethylaminomethyl (cmnm) group at the wobble position (U34) of certain tRNAs, forming tRNA-cmnm(5)s(2)U34. This Bacillus pumilus (strain SAFR-032) protein is tRNA modification GTPase MnmE.